The sequence spans 187 residues: Shikimate kinase (187 aa).

14 to 19 (GSGKST) contributes to the ATP binding site. Position 18 (Ser18) interacts with Mg(2+). Substrate contacts are provided by Asp36, Arg60, and Gly82. Arg120 contacts ATP. Arg147 lines the substrate pocket.

This sequence belongs to the shikimate kinase family. As to quaternary structure, monomer. Requires Mg(2+) as cofactor.

It is found in the cytoplasm. The catalysed reaction is shikimate + ATP = 3-phosphoshikimate + ADP + H(+). It participates in metabolic intermediate biosynthesis; chorismate biosynthesis; chorismate from D-erythrose 4-phosphate and phosphoenolpyruvate: step 5/7. Catalyzes the specific phosphorylation of the 3-hydroxyl group of shikimic acid using ATP as a cosubstrate. The protein is Shikimate kinase of Chlorobaculum parvum (strain DSM 263 / NCIMB 8327) (Chlorobium vibrioforme subsp. thiosulfatophilum).